Here is a 232-residue protein sequence, read N- to C-terminus: MSLVDTVKNAFVPIHREGYPFIAACGAGTLFLGYFSSVLFWLGLILTAWCVYFFRDPERVTPVDDRLVVSPADGIISAVGPAVPPRELGLGNVEMTRISVFMNVFSCHVNRSPVRGRIAKIEHRPGKFLNAELDKASTENERNGLVIESPNGTVAAVQIAGLVARRIVCWAEAGGSIGTGERFGLIRFGSRVDVFLPLTATPRVAVGQTAVGGETVLAEFGGVAGTPLVRIS.

The Schiff-base intermediate with substrate; via pyruvic acid role is filled by Ser-190. Position 190 is a pyruvic acid (Ser); by autocatalysis (Ser-190).

This sequence belongs to the phosphatidylserine decarboxylase family. PSD-A subfamily. Heterodimer of a large membrane-associated beta subunit and a small pyruvoyl-containing alpha subunit. It depends on pyruvate as a cofactor. Is synthesized initially as an inactive proenzyme. Formation of the active enzyme involves a self-maturation process in which the active site pyruvoyl group is generated from an internal serine residue via an autocatalytic post-translational modification. Two non-identical subunits are generated from the proenzyme in this reaction, and the pyruvate is formed at the N-terminus of the alpha chain, which is derived from the carboxyl end of the proenzyme. The post-translation cleavage follows an unusual pathway, termed non-hydrolytic serinolysis, in which the side chain hydroxyl group of the serine supplies its oxygen atom to form the C-terminus of the beta chain, while the remainder of the serine residue undergoes an oxidative deamination to produce ammonia and the pyruvoyl prosthetic group on the alpha chain.

The protein resides in the cell membrane. The catalysed reaction is a 1,2-diacyl-sn-glycero-3-phospho-L-serine + H(+) = a 1,2-diacyl-sn-glycero-3-phosphoethanolamine + CO2. The protein operates within phospholipid metabolism; phosphatidylethanolamine biosynthesis; phosphatidylethanolamine from CDP-diacylglycerol: step 2/2. Functionally, catalyzes the formation of phosphatidylethanolamine (PtdEtn) from phosphatidylserine (PtdSer). The sequence is that of Phosphatidylserine decarboxylase proenzyme from Mesorhizobium japonicum (strain LMG 29417 / CECT 9101 / MAFF 303099) (Mesorhizobium loti (strain MAFF 303099)).